Consider the following 613-residue polypeptide: Carotenoid dioxygenase (613 aa).

Residues Met1 to Asp25 form a disordered region. 4 residues coordinate Fe(2+): His261, His313, His383, and His595.

Belongs to the carotenoid oxygenase family. Fe(2+) serves as cofactor.

Its subcellular location is the cytoplasm. The protein resides in the cytosol. The enzyme catalyses torulene + O2 = 4'-apo-beta-carotenal + 3-methyl-2-butenal. The protein operates within carotenoid biosynthesis. In terms of biological role, torulene dioxygenase; part of pathway that mediates the biosynthesis of neurosporaxanthin, a carboxylic apocarotenoid acting as an essential protective pigments and leading to orange pigmentation. Cao-2 mediates the cleavage of torulene into beta-apo-4'-carotenal, the aldehyde corresponding to the acidic neurosporaxanthin. Is not able to use gamma-carotene (that it is not desaturated at the C4'-C5' bond) as substrate, which suggests a high specificity of cao-2 in cleaving the C4'-C5' double bond. Neurosporaxanthin is synthesized from geranyl-geranyl pyrophosphate (GGPP) through several enzymatic activities. Phytoene synthase activity performed by the bifunctional enzyme al-2 first produces phytoene from geranyl-geranyl pyrophosphate (GGPP). The phytoene dehydrogenase al-1 then introduces 5 desaturations to lead to 3,4-didehydrolycopene via the intermediates phytofluene, zeta-carotene, neurosporene and lycopene. Al-2 cyclase activity then converts 3,4-didehydrolycopene into torulene. Al-2 can also convet lycopene into gamma-carotene which in turn is converted to beta-carotene by an additional al-2 cyclization reaction. Torulene is the substrate of the dioxidase cao-2 that breaks the molecule, removing five carbon atoms to yield beta-apo-4'-carotenal, whereas the aldehyde dehydrogenase ylo-1 mediates the last step by converting beta-apo-4'-carotenal into neurosporaxanthin. The protein is Carotenoid dioxygenase of Neurospora crassa (strain ATCC 24698 / 74-OR23-1A / CBS 708.71 / DSM 1257 / FGSC 987).